Reading from the N-terminus, the 969-residue chain is Leucine--tRNA ligase (969 aa).

The segment at 1–23 (MTESPTTSPATGSGAAAPDSDAP) is disordered. The 'HIGH' region motif lies at 78–89 (PYPSGEGLHVGH). Residues 737 to 741 (KIGKS) carry the 'KMSKS' region motif. Residue Lys740 coordinates ATP.

It belongs to the class-I aminoacyl-tRNA synthetase family.

The protein localises to the cytoplasm. It carries out the reaction tRNA(Leu) + L-leucine + ATP = L-leucyl-tRNA(Leu) + AMP + diphosphate. The chain is Leucine--tRNA ligase from Mycolicibacterium paratuberculosis (strain ATCC BAA-968 / K-10) (Mycobacterium paratuberculosis).